The primary structure comprises 286 residues: Bifunctional protein FolD (286 aa).

Residues 165–167 (GRS), Ser-190, and Val-231 contribute to the NADP(+) site.

It belongs to the tetrahydrofolate dehydrogenase/cyclohydrolase family. Homodimer.

The catalysed reaction is (6R)-5,10-methylene-5,6,7,8-tetrahydrofolate + NADP(+) = (6R)-5,10-methenyltetrahydrofolate + NADPH. It carries out the reaction (6R)-5,10-methenyltetrahydrofolate + H2O = (6R)-10-formyltetrahydrofolate + H(+). It participates in one-carbon metabolism; tetrahydrofolate interconversion. In terms of biological role, catalyzes the oxidation of 5,10-methylenetetrahydrofolate to 5,10-methenyltetrahydrofolate and then the hydrolysis of 5,10-methenyltetrahydrofolate to 10-formyltetrahydrofolate. This Bacillus cereus (strain ATCC 10987 / NRS 248) protein is Bifunctional protein FolD.